A 173-amino-acid polypeptide reads, in one-letter code: NADH-ubiquinone oxidoreductase chain 6 (173 aa).

Transmembrane regions (helical) follow at residues 1–21 (MTYF…AVAS), 27–47 (YGVV…LSLG), 48–68 (ISFV…VVFV), 87–107 (VIGY…IGGF), and 139–159 (CGVG…FVVL).

It belongs to the complex I subunit 6 family.

The protein resides in the mitochondrion membrane. The catalysed reaction is a ubiquinone + NADH + 5 H(+)(in) = a ubiquinol + NAD(+) + 4 H(+)(out). In terms of biological role, core subunit of the mitochondrial membrane respiratory chain NADH dehydrogenase (Complex I) that is believed to belong to the minimal assembly required for catalysis. Complex I functions in the transfer of electrons from NADH to the respiratory chain. The immediate electron acceptor for the enzyme is believed to be ubiquinone. This Alca torda (Razorbill) protein is NADH-ubiquinone oxidoreductase chain 6 (MT-ND6).